A 561-amino-acid polypeptide reads, in one-letter code: Tetracenomycin A2 monooxygenase-dioxygenase (561 aa).

Positions 15, 35, 128, and 152 each coordinate FAD. Tyrosine 231 functions as the Proton acceptor in the catalytic mechanism. Aspartate 322 provides a ligand contact to FAD.

This sequence belongs to the PheA/TfdB FAD monooxygenase family. As to quaternary structure, monomer. May form oligomers up to homohexamers. FAD is required as a cofactor.

The enzyme catalyses tetracenomycin A2 + 2 NADPH + 2 O2 + 2 H(+) = tetracenomycin C + 2 NADP(+) + H2O. Its pathway is antibiotic biosynthesis; tetracenomycin C biosynthesis. Involved in the biosynthesis of tetracenomycin C (TCM C). Catalyzes the triple hydroxylation of tetracenomycin A2 (TCM A2) at positions C-4, C-4a and C-12a to give tetracenomycin C (TCM C). Can use either NADH or NADPH as electron donors, but prefers NADPH under physiological conditions. The chain is Tetracenomycin A2 monooxygenase-dioxygenase from Streptomyces glaucescens.